The chain runs to 232 residues: Ureidoacrylate amidohydrolase RutB (232 aa).

Residue aspartate 26 is the Proton acceptor of the active site. Residue lysine 135 is part of the active site. Catalysis depends on cysteine 168, which acts as the Nucleophile.

The protein belongs to the isochorismatase family. RutB subfamily.

It carries out the reaction (Z)-3-ureidoacrylate + H2O + H(+) = (Z)-3-aminoacrylate + NH4(+) + CO2. The enzyme catalyses (Z)-3-ureidoacrylate + H2O = (Z)-3-aminoacrylate + carbamate + H(+). It catalyses the reaction (Z)-2-methylureidoacrylate + H2O + H(+) = (Z)-2-methylaminoacrylate + NH4(+) + CO2. Hydrolyzes ureidoacrylate to form aminoacrylate and carbamate. The carbamate hydrolyzes spontaneously, thereby releasing one of the nitrogen atoms of the pyrimidine ring as ammonia and one of its carbon atoms as CO2. In Cronobacter sakazakii (strain ATCC BAA-894) (Enterobacter sakazakii), this protein is Ureidoacrylate amidohydrolase RutB.